Consider the following 361-residue polypeptide: Pseudouridine-5'-phosphate glycosidase (361 aa).

The Proton donor role is filled by E27. Substrate contacts are provided by K88 and V108. D140 serves as a coordination point for Mn(2+). A substrate-binding site is contributed by 142 to 144 (SAD). The active-site Nucleophile is the K161. The interval 306-361 (DRSPTDPAAPDPTAPDPAAPDPTAPDPAAPDSAAPDLAGPDPSAPDPAAVARAHRP) is disordered. The span at 312-333 (PAAPDPTAPDPAAPDPTAPDPA) shows a compositional bias: pro residues. Residues 334 to 354 (APDSAAPDLAGPDPSAPDPAA) show a composition bias toward low complexity.

The protein belongs to the pseudouridine-5'-phosphate glycosidase family. Homotrimer. Mn(2+) is required as a cofactor.

It catalyses the reaction D-ribose 5-phosphate + uracil = psi-UMP + H2O. Functionally, catalyzes the reversible cleavage of pseudouridine 5'-phosphate (PsiMP) to ribose 5-phosphate and uracil. Functions biologically in the cleavage direction, as part of a pseudouridine degradation pathway. In Frankia alni (strain DSM 45986 / CECT 9034 / ACN14a), this protein is Pseudouridine-5'-phosphate glycosidase.